Here is an 897-residue protein sequence, read N- to C-terminus: Protein translocase subunit SecA (897 aa).

ATP contacts are provided by residues Gln89, 107-111 (GEGKT), and Asp517. The segment covering 839-856 (DDAQATHSNPNEQTKQAS) has biased composition (polar residues). The interval 839–897 (DDAQATHSNPNEQTKQASITNNIQTQTDQQNTYQRKEKKVGRNEPCPCGSGKKYKKCHG) is disordered. Over residues 857-870 (ITNNIQTQTDQQNT) the composition is skewed to low complexity. Zn(2+)-binding residues include Cys884, Cys886, Cys895, and His896.

The protein belongs to the SecA family. Monomer and homodimer. Part of the essential Sec protein translocation apparatus which comprises SecA, SecYEG and auxiliary proteins SecDF-YajC and YidC. Zn(2+) serves as cofactor.

The protein localises to the cell inner membrane. It is found in the cytoplasm. It carries out the reaction ATP + H2O + cellular proteinSide 1 = ADP + phosphate + cellular proteinSide 2.. Its function is as follows. Part of the Sec protein translocase complex. Interacts with the SecYEG preprotein conducting channel. Has a central role in coupling the hydrolysis of ATP to the transfer of proteins into and across the cell membrane, serving as an ATP-driven molecular motor driving the stepwise translocation of polypeptide chains across the membrane. In Vesicomyosocius okutanii subsp. Calyptogena okutanii (strain HA), this protein is Protein translocase subunit SecA.